Consider the following 201-residue polypeptide: Cell division protein SepF (201 aa).

Basic and acidic residues predominate over residues 27-38 (VQERTSVQRDSR). The interval 27–99 (VQERTSVQRD…PRVQNKDSVR (73 aa)) is disordered. The segment covering 43 to 54 (QEASQRSHMTNS) has biased composition (polar residues). A compositionally biased stretch (basic and acidic residues) spans 72–81 (NRQERQRVQR). The segment covering 83–92 (NAYQQATPRV) has biased composition (polar residues).

This sequence belongs to the SepF family. As to quaternary structure, homodimer. Interacts with FtsZ.

It is found in the cytoplasm. In terms of biological role, cell division protein that is part of the divisome complex and is recruited early to the Z-ring. Probably stimulates Z-ring formation, perhaps through the cross-linking of FtsZ protofilaments. Its function overlaps with FtsA. The sequence is that of Cell division protein SepF from Streptococcus agalactiae serotype V (strain ATCC BAA-611 / 2603 V/R).